Reading from the N-terminus, the 763-residue chain is Ethylene receptor 2 (763 aa).

Transmembrane regions (helical) follow at residues 58–78, 86–106, and 115–135; these read FLIAMAYFSIPLELLYFATCS, IVLQFGAFIVLCGLTHLITMF, and VVLALTVAKFLTALVSFATAI. 2 residues coordinate Cu cation: Cys-97 and His-101. One can recognise a GAF domain in the interval 190–339; that stretch reads DRHTILYTTM…VVADQVAVAL (150 aa). The 234-residue stretch at 382–615 folds into the Histidine kinase domain; that stretch reads AMYDGMRRPM…TIMLALQFQL (234 aa). One can recognise a Response regulatory domain in the interval 641-760; that stretch reads QVILVDSDDT…ALGDELYRVL (120 aa). Asp-692 is subject to 4-aspartylphosphate.

It belongs to the ethylene receptor family. Requires Cu cation as cofactor. Expressed in anthers and hulls.

The protein localises to the endoplasmic reticulum membrane. The catalysed reaction is ATP + protein L-histidine = ADP + protein N-phospho-L-histidine.. In terms of biological role, ethylene receptor related to bacterial two-component regulators. Acts as a negative regulator of ethylene signaling. May delay the transition from the vegetative stage to the floral stage by up-regulating GI (GIGANTEA) and RCN1 and cause starch accumulation in stems by down-regulating the alpha-amylase AMY3D. The sequence is that of Ethylene receptor 2 from Oryza sativa subsp. indica (Rice).